Consider the following 168-residue polypeptide: Photosystem I assembly protein Ycf3 (168 aa).

3 TPR repeats span residues 35–68, 72–105, and 120–153; these read AFTYYRDGMSAQSEGNYAEALQNYYEAMRLEMDP, SYILYNIGLIHTSNGEHTKALEYYFRALERNPFL, and GEQAVREGDSEIAEAWFDQAAEYWKQAIALTPGN.

The protein belongs to the Ycf3 family.

The protein localises to the plastid. Its subcellular location is the chloroplast thylakoid membrane. Functionally, essential for the assembly of the photosystem I (PSI) complex. May act as a chaperone-like factor to guide the assembly of the PSI subunits. In Plantago lanceolata (English plantain), this protein is Photosystem I assembly protein Ycf3.